Reading from the N-terminus, the 375-residue chain is F-box/kelch-repeat protein At4g39580 (375 aa).

An F-box domain is found at 20–66 (PTTNLFLPDDILLSSLSRISRLYYPTFSLVSKSFRSLIASPELYQTR). 3 Kelch repeats span residues 132–178 (NIYA…VLDG), 179–225 (KIYV…KSVG), and 229–269 (KYHL…VINN).

This Arabidopsis thaliana (Mouse-ear cress) protein is F-box/kelch-repeat protein At4g39580.